Reading from the N-terminus, the 317-residue chain is 2,3-dihydroxyphenylpropionate/2,3-dihydroxicinnamic acid 1,2-dioxygenase 2 (317 aa).

The active-site Proton donor is the histidine 115. Histidine 179 serves as the catalytic Proton acceptor.

It belongs to the LigB/MhpB extradiol dioxygenase family. Homotetramer. Fe(2+) is required as a cofactor.

The enzyme catalyses 3-(2,3-dihydroxyphenyl)propanoate + O2 = (2Z,4E)-2-hydroxy-6-oxonona-2,4-dienedioate + H(+). It carries out the reaction (2E)-3-(2,3-dihydroxyphenyl)prop-2-enoate + O2 = (2Z,4E,7E)-2-hydroxy-6-oxonona-2,4,7-trienedioate + H(+). The protein operates within aromatic compound metabolism; 3-phenylpropanoate degradation. Catalyzes the non-heme iron(II)-dependent oxidative cleavage of 2,3-dihydroxyphenylpropionic acid and 2,3-dihydroxicinnamic acid into 2-hydroxy-6-ketononadienedioate and 2-hydroxy-6-ketononatrienedioate, respectively. The polypeptide is 2,3-dihydroxyphenylpropionate/2,3-dihydroxicinnamic acid 1,2-dioxygenase 2 (Dechloromonas aromatica (strain RCB)).